Consider the following 143-residue polypeptide: Ribosome-binding factor A (143 aa).

The disordered stretch occupies residues 1–20 (MRFMGKNKFHTGPGPSQRQL).

It belongs to the RbfA family. As to quaternary structure, monomer. Binds 30S ribosomal subunits, but not 50S ribosomal subunits or 70S ribosomes.

The protein localises to the cytoplasm. Functionally, one of several proteins that assist in the late maturation steps of the functional core of the 30S ribosomal subunit. Associates with free 30S ribosomal subunits (but not with 30S subunits that are part of 70S ribosomes or polysomes). Required for efficient processing of 16S rRNA. May interact with the 5'-terminal helix region of 16S rRNA. This is Ribosome-binding factor A from Roseobacter denitrificans (strain ATCC 33942 / OCh 114) (Erythrobacter sp. (strain OCh 114)).